Here is a 493-residue protein sequence, read N- to C-terminus: 3-octaprenyl-4-hydroxybenzoate carboxy-lyase (493 aa).

N172 lines the Mn(2+) pocket. Prenylated FMN contacts are provided by residues 175-177 (IYR), 189-191 (RWL), and 194-195 (RG). Mn(2+) is bound at residue E238. Residue D287 is the Proton donor of the active site.

This sequence belongs to the UbiD family. As to quaternary structure, homohexamer. Prenylated FMN is required as a cofactor. It depends on Mn(2+) as a cofactor.

The protein localises to the cell membrane. The enzyme catalyses a 4-hydroxy-3-(all-trans-polyprenyl)benzoate + H(+) = a 2-(all-trans-polyprenyl)phenol + CO2. It functions in the pathway cofactor biosynthesis; ubiquinone biosynthesis. Catalyzes the decarboxylation of 3-octaprenyl-4-hydroxy benzoate to 2-octaprenylphenol, an intermediate step in ubiquinone biosynthesis. This is 3-octaprenyl-4-hydroxybenzoate carboxy-lyase from Cellvibrio japonicus (strain Ueda107) (Pseudomonas fluorescens subsp. cellulosa).